Here is a 389-residue protein sequence, read N- to C-terminus: Probable protein phosphatase 2C 12 (389 aa).

One can recognise a PPM-type phosphatase domain in the interval 42 to 356 (VASLFSQRGK…DDCSAVCLFL (315 aa)). Mn(2+) contacts are provided by aspartate 77 and glycine 78. Residues 119 to 145 (AFSDDAAASSSADSSGNSSPQPSASAS) are disordered. The segment covering 121-145 (SDDAAASSSADSSGNSSPQPSASAS) has biased composition (low complexity). Mn(2+)-binding residues include aspartate 301 and aspartate 347.

The protein belongs to the PP2C family. Mg(2+) serves as cofactor. Requires Mn(2+) as cofactor.

It catalyses the reaction O-phospho-L-seryl-[protein] + H2O = L-seryl-[protein] + phosphate. The enzyme catalyses O-phospho-L-threonyl-[protein] + H2O = L-threonyl-[protein] + phosphate. The protein is Probable protein phosphatase 2C 12 of Oryza sativa subsp. japonica (Rice).